Here is a 589-residue protein sequence, read N- to C-terminus: Parathyroid hormone/parathyroid hormone-related peptide receptor (589 aa).

A signal peptide spans 1-28; it reads MGAARIAPGLALLLCCPVLSSAYALVDA. The Extracellular portion of the chain corresponds to 29-188; that stretch reads DDVMTKEEQI…REREVFDRLG (160 aa). Disulfide bonds link Cys-48/Cys-117, Cys-108/Cys-148, and Cys-131/Cys-170. The interval 64 to 105 is disordered; it reads ESDKGWASASTSGKPKKEKPSGKLHPESEEDKEVPTGSRPRG. Residues 81 to 90 show a composition bias toward basic and acidic residues; sequence EKPSGKLHPE. 4 N-linked (GlcNAc...) asparagine glycosylation sites follow: Asn-151, Asn-161, Asn-166, and Asn-176. Residues 189–209 traverse the membrane as a helical segment; it reads MIYTVGYSVSLASLTVAVLIL. Topologically, residues 210–223 are cytoplasmic; sequence AYFRRLHCTRNYIH. The chain crosses the membrane as a helical span at residues 224-244; the sequence is MHLFLSFMLRAVSIFVKDAVL. The Extracellular portion of the chain corresponds to 245 to 294; it reads YSGTALDEAERLTEEELRAIAQAPPPPAAAAGYVGCRVAVTFFLYFLATN. Residues 295–315 form a helical membrane-spanning segment; it reads YYWILVEGLYLHSLIFMAFFS. Over 316–318 the chain is Cytoplasmic; that stretch reads EKK. A helical transmembrane segment spans residues 319–339; it reads YLWGFTVFGWGLPAIFVAVWV. At 340–360 the chain is on the extracellular side; sequence SVRATLANTGCWDLSSGNKKW. A helical transmembrane segment spans residues 361-381; sequence IIQVPILASIVLNFILFINIV. The Cytoplasmic portion of the chain corresponds to 382 to 404; sequence RVLATKLRETNAGRCDTRQQYRK. A helical transmembrane segment spans residues 405–425; the sequence is LLKSTLVLMPLFGVHYIVFMA. Over 426 to 439 the chain is Extracellular; the sequence is TPYTEVSGTLWQVQ. A helical transmembrane segment spans residues 440–460; that stretch reads MHYEMLFNSFQGFFVAIIYCF. The Cytoplasmic segment spans residues 461–589; that stretch reads CNGEVQAEIK…LLQEEWETVM (129 aa). The Important for interaction with G proteins signature appears at 473–476; that stretch reads WSRW. Residues 524-549 are disordered; sequence AATTNGHPPLPGHTKSGSPALQATPP. Thr-547 bears the Phosphothreonine mark.

The protein belongs to the G-protein coupled receptor 2 family. As to quaternary structure, homodimer in the absence of bound ligand. Peptide hormone binding leads to dissociation of the homodimer. N-glycosylated.

Its subcellular location is the cell membrane. Its function is as follows. G-protein-coupled receptor for parathyroid hormone (PTH) and for parathyroid hormone-related peptide (PTHLH). Ligand binding causes a conformation change that triggers signaling via guanine nucleotide-binding proteins (G proteins) and modulates the activity of downstream effectors, such as adenylate cyclase (cAMP). PTH1R is coupled to G(s) G alpha proteins and mediates activation of adenylate cyclase activity. PTHLH dissociates from PTH1R more rapidly than PTH; as consequence, the cAMP response induced by PTHLH decays faster than the response induced by PTH. The sequence is that of Parathyroid hormone/parathyroid hormone-related peptide receptor (PTH1R) from Bos taurus (Bovine).